A 310-amino-acid polypeptide reads, in one-letter code: Glutaminase (310 aa).

7 residues coordinate substrate: Ser66, Asn117, Glu161, Asn168, Tyr192, Tyr244, and Val262. Lys294 carries the post-translational modification N6-acetyllysine.

The protein belongs to the glutaminase family. In terms of assembly, homotetramer.

It catalyses the reaction L-glutamine + H2O = L-glutamate + NH4(+). The sequence is that of Glutaminase from Escherichia coli O81 (strain ED1a).